The sequence spans 409 residues: Spermatogenesis-associated protein 2-like protein (409 aa).

Disordered stretches follow at residues 233–257 (EDEG…TSEL), 270–299 (LWGA…PQPE), and 313–337 (RPGD…IPEP).

Belongs to the SPATA2 family.

The chain is Spermatogenesis-associated protein 2-like protein (SPATA2L) from Bos taurus (Bovine).